Reading from the N-terminus, the 224-residue chain is Large ribosomal subunit protein uL1m (224 aa).

This sequence belongs to the universal ribosomal protein uL1 family.

It is found in the mitochondrion. This chain is Large ribosomal subunit protein uL1m (RPL1), found in Reclinomonas americana.